The sequence spans 111 residues: Photosystem II reaction center Psb28 protein (111 aa).

The protein belongs to the Psb28 family. In terms of assembly, part of the photosystem II complex.

The protein localises to the cellular thylakoid membrane. This is Photosystem II reaction center Psb28 protein from Acaryochloris marina (strain MBIC 11017).